The primary structure comprises 110 residues: Inner membrane protein H108R (110 aa).

The chain crosses the membrane as a helical span at residues 10-32; the sequence is LIVIITILITTRELSTTMLIVSL.

It belongs to the asfivirus H108R family.

The protein localises to the virion membrane. This chain is Inner membrane protein H108R, found in African swine fever virus (isolate Pig/Kenya/KEN-50/1950) (ASFV).